Reading from the N-terminus, the 145-residue chain is Probable inactive ribonuclease-like protein 12 (145 aa).

An N-terminal signal peptide occupies residues 1 to 19; it reads MVLMVVVFLLLLFWENELT.

It belongs to the pancreatic ribonuclease family.

The protein resides in the secreted. Functionally, does not exhibit any ribonuclease activity. This is Probable inactive ribonuclease-like protein 12 (Rnase12) from Mus musculus (Mouse).